The following is a 1027-amino-acid chain: Scavenger receptor cysteine-rich domain-containing protein SCART1 (1027 aa).

The signal sequence occupies residues 1-19 (MRAALWTLGLGPLLLNLWA). At 20-906 (VPIGGPGALR…APFRTFWVVS (887 aa)) the chain is on the extracellular side. The region spanning 28–128 (LRLAYRHSTC…HAWVVVALCS (101 aa)) is the SRCR 1 domain. 3 disulfide bridges follow: cysteine 53-cysteine 117, cysteine 66-cysteine 127, and cysteine 97-cysteine 107. The N-linked (GlcNAc...) asparagine glycan is linked to asparagine 94. N-linked (GlcNAc...) asparagine glycosylation is present at asparagine 129. SRCR domains lie at 135–227 (LRLV…VVCS), 232–326 (ARLV…LRCS), 328–428 (FRMV…AVCS), 434–534 (LRLR…VVCS), 555–656 (LSLH…VFCS), 661–761 (LRLR…AGLS), and 786–886 (LRVR…VRCW). 6 cysteine pairs are disulfide-bonded: cysteine 160/cysteine 216, cysteine 171/cysteine 226, cysteine 196/cysteine 206, cysteine 253/cysteine 315, cysteine 266/cysteine 325, and cysteine 297/cysteine 307. The N-linked (GlcNAc...) asparagine glycan is linked to asparagine 332. Disulfide bonds link cysteine 353–cysteine 417, cysteine 366–cysteine 427, cysteine 397–cysteine 407, cysteine 472–cysteine 533, cysteine 503–cysteine 513, cysteine 594–cysteine 655, and cysteine 625–cysteine 635. Intrachain disulfides connect cysteine 824–cysteine 885 and cysteine 855–cysteine 865. A helical transmembrane segment spans residues 907–927 (VVLGSLLGLLLLGLMAFLILP). The Cytoplasmic portion of the chain corresponds to 928 to 1027 (RVTQAMQRGL…AAFPLEEMTL (100 aa)).

Mainly expressed by CD4(+) and CD8(+) T lymphocytes. Also highly expressed in small intestine and colon. Expressed (at protein level) in small intestine, stomach, gall bladder, and placental villi.

Its subcellular location is the membrane. Functionally, may play a role in the immune system, perhaps as a co-receptor on alphabeta and gammadelta T-cells. The polypeptide is Scavenger receptor cysteine-rich domain-containing protein SCART1 (Homo sapiens (Human)).